A 156-amino-acid polypeptide reads, in one-letter code: ATP synthase subunit b (156 aa).

Residues Ile3–Thr23 form a helical membrane-spanning segment.

Belongs to the ATPase B chain family. In terms of assembly, F-type ATPases have 2 components, F(1) - the catalytic core - and F(0) - the membrane proton channel. F(1) has five subunits: alpha(3), beta(3), gamma(1), delta(1), epsilon(1). F(0) has three main subunits: a(1), b(2) and c(10-14). The alpha and beta chains form an alternating ring which encloses part of the gamma chain. F(1) is attached to F(0) by a central stalk formed by the gamma and epsilon chains, while a peripheral stalk is formed by the delta and b chains.

Its subcellular location is the cell membrane. Functionally, f(1)F(0) ATP synthase produces ATP from ADP in the presence of a proton or sodium gradient. F-type ATPases consist of two structural domains, F(1) containing the extramembraneous catalytic core and F(0) containing the membrane proton channel, linked together by a central stalk and a peripheral stalk. During catalysis, ATP synthesis in the catalytic domain of F(1) is coupled via a rotary mechanism of the central stalk subunits to proton translocation. Its function is as follows. Component of the F(0) channel, it forms part of the peripheral stalk, linking F(1) to F(0). The sequence is that of ATP synthase subunit b from Stenotrophomonas maltophilia (strain K279a).